The sequence spans 378 residues: Chaperone protein DnaJ 2 (378 aa).

A J domain is found at 4–68; that stretch reads DYYGLLGVSR…EKRRIVDLGG (65 aa). The CR-type zinc-finger motif lies at 128–210; it reads GVTKQVTVDT…CVGDGRVRAR (83 aa). Zn(2+) is bound by residues Cys-141, Cys-144, Cys-158, Cys-161, Cys-184, Cys-187, Cys-198, and Cys-201. CXXCXGXG motif repeat units follow at residues 141 to 148, 158 to 165, 184 to 191, and 198 to 205; these read CDRCQGKG, CDTCGGRG, CPTCRGVG, and CCQCVGDG.

Belongs to the DnaJ family. Homodimer. The cofactor is Zn(2+).

It localises to the cytoplasm. Participates actively in the response to hyperosmotic and heat shock by preventing the aggregation of stress-denatured proteins and by disaggregating proteins, also in an autonomous, DnaK-independent fashion. Unfolded proteins bind initially to DnaJ; upon interaction with the DnaJ-bound protein, DnaK hydrolyzes its bound ATP, resulting in the formation of a stable complex. GrpE releases ADP from DnaK; ATP binding to DnaK triggers the release of the substrate protein, thus completing the reaction cycle. Several rounds of ATP-dependent interactions between DnaJ, DnaK and GrpE are required for fully efficient folding. Also involved, together with DnaK and GrpE, in the DNA replication of plasmids through activation of initiation proteins. The sequence is that of Chaperone protein DnaJ 2 from Mycobacterium leprae (strain TN).